A 248-amino-acid chain; its full sequence is Large ribosomal subunit protein uL30B (248 aa).

Positions 1 to 45 (MSQKKQKIQVEQKVPENVAKKTQRDSKLRDAVAKRRTERLAANKT) are disordered. The span at 8 to 41 (IQVEQKVPENVAKKTQRDSKLRDAVAKRRTERLA) shows a compositional bias: basic and acidic residues.

The protein belongs to the universal ribosomal protein uL30 family.

Binds to G-rich structures in 28S rRNA and in mRNAs. Plays a regulatory role in the translation apparatus; inhibits cell-free translation of mRNAs. In Paramecium tetraurelia, this protein is Large ribosomal subunit protein uL30B (Rpl7-2).